A 176-amino-acid polypeptide reads, in one-letter code: ATP-dependent protease subunit HslV (176 aa).

Residue Thr2 is part of the active site. Na(+) is bound by residues Gly157, Cys160, and Thr163.

Belongs to the peptidase T1B family. HslV subfamily. A double ring-shaped homohexamer of HslV is capped on each side by a ring-shaped HslU homohexamer. The assembly of the HslU/HslV complex is dependent on binding of ATP.

It localises to the cytoplasm. The catalysed reaction is ATP-dependent cleavage of peptide bonds with broad specificity.. With respect to regulation, allosterically activated by HslU binding. In terms of biological role, protease subunit of a proteasome-like degradation complex believed to be a general protein degrading machinery. The protein is ATP-dependent protease subunit HslV of Salmonella gallinarum (strain 287/91 / NCTC 13346).